The sequence spans 256 residues: Expansin-like B1 (256 aa).

The first 24 residues, 1–24 (MAQLLRRHLPVILSLILFLSKATA), serve as a signal peptide directing secretion. The N-linked (GlcNAc...) asparagine glycan is linked to Asn27. The region spanning 46–150 (NGACEYGAFG…RRVSCTYPNK (105 aa)) is the Expansin-like EG45 domain. Positions 164–249 (NYLEFEIWYQ…NWTAGATYDS (86 aa)) constitute an Expansin-like CBD domain. 2 N-linked (GlcNAc...) asparagine glycosylation sites follow: Asn189 and Asn240.

The protein belongs to the expansin family. Expansin-like B subfamily.

The protein resides in the secreted. The chain is Expansin-like B1 (EXLB1) from Oryza sativa subsp. japonica (Rice).